A 97-amino-acid polypeptide reads, in one-letter code: Large ribosomal subunit protein uL23 (97 aa).

It belongs to the universal ribosomal protein uL23 family. Part of the 50S ribosomal subunit. Contacts protein L29, and trigger factor when it is bound to the ribosome.

Its function is as follows. One of the early assembly proteins it binds 23S rRNA. One of the proteins that surrounds the polypeptide exit tunnel on the outside of the ribosome. Forms the main docking site for trigger factor binding to the ribosome. The sequence is that of Large ribosomal subunit protein uL23 from Pelagibacter ubique (strain HTCC1062).